The following is a 296-amino-acid chain: tRNA dimethylallyltransferase (296 aa).

11 to 18 provides a ligand contact to ATP; it reads GPTAVGKT. Residue 13-18 participates in substrate binding; the sequence is TAVGKT. The tract at residues 36-39 is interaction with substrate tRNA; that stretch reads DSQQ.

It belongs to the IPP transferase family. In terms of assembly, monomer. Mg(2+) is required as a cofactor.

It carries out the reaction adenosine(37) in tRNA + dimethylallyl diphosphate = N(6)-dimethylallyladenosine(37) in tRNA + diphosphate. Catalyzes the transfer of a dimethylallyl group onto the adenine at position 37 in tRNAs that read codons beginning with uridine, leading to the formation of N6-(dimethylallyl)adenosine (i(6)A). In Streptococcus agalactiae serotype III (strain NEM316), this protein is tRNA dimethylallyltransferase.